A 146-amino-acid polypeptide reads, in one-letter code: Hemoglobin subunit beta (146 aa).

Val-1 is subject to N-acetylvaline. Positions 2–146 (HLTAEEKSLV…VANALAHKYH (145 aa)) constitute a Globin domain. A Phosphothreonine modification is found at Thr-12. Ser-44 bears the Phosphoserine mark. Lys-59 carries the post-translational modification N6-acetyllysine. Heme b is bound at residue His-63. Lys-82 carries the post-translational modification N6-acetyllysine. His-92 is a binding site for heme b. Cys-93 carries the S-nitrosocysteine modification. Lys-144 carries the post-translational modification N6-acetyllysine.

The protein belongs to the globin family. Heterotetramer of two alpha chains and two beta chains. As to expression, red blood cells.

Involved in oxygen transport from the lung to the various peripheral tissues. This Vulpes vulpes (Red fox) protein is Hemoglobin subunit beta (HBB).